Here is a 365-residue protein sequence, read N- to C-terminus: Class E basic helix-loop-helix protein 22 (365 aa).

3 disordered regions span residues alanine 34–glycine 93, glycine 134–cysteine 156, and histidine 188–lysine 225. Residues glycine 82–glycine 93 are compositionally biased toward gly residues. Residues glycine 191–serine 216 show a composition bias toward gly residues. The region spanning alanine 226–glutamine 280 is the bHLH domain.

Heterodimer with other bHLH proteins, like TCF3/E47. As to expression, kidney, lung, brain and pancreas (insulinoma).

Its subcellular location is the nucleus. In terms of biological role, inhibits DNA binding of TCF3/E47 homodimers and TCF3 (E47)/NEUROD1 heterodimers and acts as a strong repressor of Neurod1 and Myod-responsive genes, probably by heterodimerization with class a basic helix-loop-helix factors. Despite the presence of an intact basic domain, does not bind to DNA. This is Class E basic helix-loop-helix protein 22 (BHLHE22) from Mesocricetus auratus (Golden hamster).